We begin with the raw amino-acid sequence, 1460 residues long: Nonribosomal peptide synthetase 6 (1460 aa).

The interval 63 to 468 (EQAALHPEKI…GRQDQQVKLR (406 aa)) is adenylation. The region spanning 600 to 675 (EPTTEMEIKL…AMATKIKPLS (76 aa)) is the Carrier 1 domain. S636 is modified (O-(pantetheine 4'-phosphoryl)serine). The segment at 712-1135 (VQDVYPCTPL…AVLDPSEAQD (424 aa)) is condensation. Carrier domains are found at residues 1168 to 1241 (SPNE…GNEK) and 1236 to 1312 (SIGN…EETD). 2 positions are modified to O-(pantetheine 4'-phosphoryl)serine: S1202 and S1273. Residues 1303 to 1324 (ELASSAEETDSPQTETNSNAPY) are disordered. Over residues 1313 to 1322 (SPQTETNSNA) the composition is skewed to polar residues.

This sequence belongs to the NRP synthetase family.

It functions in the pathway siderophore biosynthesis. NRPS involved in extracellular coprogen-type siderophores biosynthesis. The role of extracellular siderophores in fungal virulence to plants is to supply iron to the fungus during plant infection, but not to act as phytotoxins, depriving their hosts of iron. This is Nonribosomal peptide synthetase 6 from Alternaria brassicicola (Dark leaf spot agent).